Here is a 449-residue protein sequence, read N- to C-terminus: Phosphoglucosamine mutase (449 aa).

Ser101 acts as the Phosphoserine intermediate in catalysis. The Mg(2+) site is built by Ser101, Asp240, Asp242, and Asp244. At Ser101 the chain carries Phosphoserine.

Belongs to the phosphohexose mutase family. The cofactor is Mg(2+). In terms of processing, activated by phosphorylation.

The enzyme catalyses alpha-D-glucosamine 1-phosphate = D-glucosamine 6-phosphate. Its function is as follows. Catalyzes the conversion of glucosamine-6-phosphate to glucosamine-1-phosphate. The chain is Phosphoglucosamine mutase from Streptococcus mutans serotype c (strain ATCC 700610 / UA159).